We begin with the raw amino-acid sequence, 955 residues long: Glycine dehydrogenase (decarboxylating) (955 aa).

Position 702 is an N6-(pyridoxal phosphate)lysine (Lys702).

It belongs to the GcvP family. As to quaternary structure, the glycine cleavage system is composed of four proteins: P, T, L and H. Pyridoxal 5'-phosphate is required as a cofactor.

It catalyses the reaction N(6)-[(R)-lipoyl]-L-lysyl-[glycine-cleavage complex H protein] + glycine + H(+) = N(6)-[(R)-S(8)-aminomethyldihydrolipoyl]-L-lysyl-[glycine-cleavage complex H protein] + CO2. In terms of biological role, the glycine cleavage system catalyzes the degradation of glycine. The P protein binds the alpha-amino group of glycine through its pyridoxal phosphate cofactor; CO(2) is released and the remaining methylamine moiety is then transferred to the lipoamide cofactor of the H protein. In Stenotrophomonas maltophilia (strain R551-3), this protein is Glycine dehydrogenase (decarboxylating).